A 377-amino-acid polypeptide reads, in one-letter code: Nitric oxide reductase FlRd-NAD(+) reductase (377 aa).

It belongs to the FAD-dependent oxidoreductase family. FAD serves as cofactor.

Its subcellular location is the cytoplasm. The enzyme catalyses 2 reduced [nitric oxide reductase rubredoxin domain] + NAD(+) + H(+) = 2 oxidized [nitric oxide reductase rubredoxin domain] + NADH. It functions in the pathway nitrogen metabolism; nitric oxide reduction. In terms of biological role, one of at least two accessory proteins for anaerobic nitric oxide (NO) reductase. Reduces the rubredoxin moiety of NO reductase. This is Nitric oxide reductase FlRd-NAD(+) reductase from Citrobacter koseri (strain ATCC BAA-895 / CDC 4225-83 / SGSC4696).